The sequence spans 222 residues: UPF0758 protein YicR (222 aa).

The MPN domain maps to 100 to 222; sequence PLLSPEMTRE…YVSFAERGWI (123 aa). Residues histidine 171, histidine 173, and aspartate 184 each contribute to the Zn(2+) site. Positions 171–184 match the JAMM motif motif; the sequence is HNHPSGCAEPSKAD.

The protein belongs to the UPF0758 family. YicR subfamily.

The protein is UPF0758 protein YicR of Escherichia coli (strain K12 / MC4100 / BW2952).